A 311-amino-acid polypeptide reads, in one-letter code: MDASLPAHMRPERSFQGFILALQRFWAEQGCVILQPYDMEMGAGTFHPATTLRALGPKPWNAAYVQPSRRPKDGRYGENPNRMQHYYQFQVIMKPSPPNLQELYLKSLAAIGIDSAVHDIRFVEDDWESPTLGAWGLGWECWCDGMEVSQFTYFQQVAGFECAPVAGELTYGLERLAMYVQGVDRVYDLNFNGRDGDAKVTYGDVFLQAEREYSKHNFEVADTAMLFEQFKMAEAACRKYLDAGWREGNRKEHLMALPAYDQCIKASHVFNLLDARGVISVTERQSYILRVRELAKACGEAWIHTEAGGAA.

This sequence belongs to the class-II aminoacyl-tRNA synthetase family. As to quaternary structure, tetramer of two alpha and two beta subunits.

The protein resides in the cytoplasm. The catalysed reaction is tRNA(Gly) + glycine + ATP = glycyl-tRNA(Gly) + AMP + diphosphate. The polypeptide is Glycine--tRNA ligase alpha subunit (Bradyrhizobium diazoefficiens (strain JCM 10833 / BCRC 13528 / IAM 13628 / NBRC 14792 / USDA 110)).